A 478-amino-acid chain; its full sequence is Melanopsin (478 aa).

Positions M1–T14 are enriched in pro residues. Residues M1 to S32 form a disordered region. Residues M1–T72 lie on the Extracellular side of the membrane. Residues L73–Y93 traverse the membrane as a helical segment. The Cytoplasmic portion of the chain corresponds to T94–M107. A helical transmembrane segment spans residues F108–F128. The Extracellular segment spans residues T129–E144. A disulfide bond links C143 and C221. A helical transmembrane segment spans residues F145 to A165. Residues L166–A188 lie on the Cytoplasmic side of the membrane. A helical membrane pass occupies residues F189–W209. Topologically, residues S210 to L238 are extracellular. A helical transmembrane segment spans residues L239–F259. At R260 to K296 the chain is on the cytoplasmic side. Residues I297–L317 traverse the membrane as a helical segment. The Extracellular segment spans residues V318–S332. The chain crosses the membrane as a helical span at residues S333–T353. K340 is modified (N6-(retinylidene)lysine). The Cytoplasmic portion of the chain corresponds to H354–M478. Positions L440–M478 are disordered. Basic and acidic residues predominate over residues L448–G465.

The protein belongs to the G-protein coupled receptor 1 family. Opsin subfamily. As to expression, expressed in the retina.

It localises to the cell membrane. The protein localises to the cell projection. The protein resides in the axon. It is found in the dendrite. Its subcellular location is the perikaryon. Photoreceptor that binds cis-retinaldehydes. Contributes to pupillar reflex, photoentrainment and other non-image forming responses to light. May be involved in the optokinetic visual tracking response. May be involved in the regulation of retinal hyaloid vessel growth and regression. This Homo sapiens (Human) protein is Melanopsin (OPN4).